The sequence spans 324 residues: Beta-ketoacyl-[acyl-carrier-protein] synthase III (324 aa).

Residues C112 and H249 contribute to the active site. The ACP-binding stretch occupies residues 250–254; the sequence is QANDR. Residue N279 is part of the active site.

This sequence belongs to the thiolase-like superfamily. FabH family. As to quaternary structure, homodimer.

It localises to the cytoplasm. It carries out the reaction malonyl-[ACP] + acetyl-CoA + H(+) = 3-oxobutanoyl-[ACP] + CO2 + CoA. It participates in lipid metabolism; fatty acid biosynthesis. Functionally, catalyzes the condensation reaction of fatty acid synthesis by the addition to an acyl acceptor of two carbons from malonyl-ACP. Catalyzes the first condensation reaction which initiates fatty acid synthesis and may therefore play a role in governing the total rate of fatty acid production. Possesses both acetoacetyl-ACP synthase and acetyl transacylase activities. Its substrate specificity determines the biosynthesis of branched-chain and/or straight-chain of fatty acids. The chain is Beta-ketoacyl-[acyl-carrier-protein] synthase III from Streptococcus pneumoniae serotype 2 (strain D39 / NCTC 7466).